Consider the following 192-residue polypeptide: uncharacterized protein (192 aa).

Transmembrane regions (helical) follow at residues 5–22, 42–61, 66–88, 101–118, 122–139, and 159–181; these read VPPL…GIGL, FLFL…HYVY, LRFL…SGKL, WGLL…ALNL, LVMW…STIL, and ALLL…LWLF.

The protein localises to the cell membrane. This is an uncharacterized protein from Treponema pallidum (strain Nichols).